Here is a 277-residue protein sequence, read N- to C-terminus: Hemin import ATP-binding protein HmuV (277 aa).

The ABC transporter domain maps to 25–260 (IHAQGLNLIL…DIIERVYGWP (236 aa)). Position 57–64 (57–64 (GPNGAGKS)) interacts with ATP.

This sequence belongs to the ABC transporter superfamily. Heme (hemin) importer (TC 3.A.1.14.5) family. The complex is composed of two ATP-binding proteins (HmuV), two transmembrane proteins (HmuU) and a solute-binding protein (HmuT).

Its subcellular location is the cell inner membrane. Part of the ABC transporter complex HmuTUV involved in hemin import. Responsible for energy coupling to the transport system. The chain is Hemin import ATP-binding protein HmuV from Photobacterium profundum (strain SS9).